The primary structure comprises 673 residues: UvrABC system protein C (673 aa).

Residues 16–95 (VEPGVYKFRD…IKEFDPRFNV (80 aa)) enclose the GIY-YIG domain. Residues 208–243 (DKMVRELERRMHAAAEDLDFETAARLRDDVQALRRA) enclose the UVR domain. Residues 488–526 (RDEAERDELDGTAAGAPLVDDDETPTSRPGIDPTTGRPR) are disordered.

Belongs to the UvrC family. As to quaternary structure, interacts with UvrB in an incision complex.

It localises to the cytoplasm. Functionally, the UvrABC repair system catalyzes the recognition and processing of DNA lesions. UvrC both incises the 5' and 3' sides of the lesion. The N-terminal half is responsible for the 3' incision and the C-terminal half is responsible for the 5' incision. The sequence is that of UvrABC system protein C from Nocardia farcinica (strain IFM 10152).